The following is a 107-amino-acid chain: Ribonuclease P protein component 4 (107 aa).

Zn(2+) is bound by residues C66, C69, C92, and C95.

This sequence belongs to the eukaryotic/archaeal RNase P protein component 4 family. Consists of a catalytic RNA component and at least 4-5 protein subunits. Zn(2+) serves as cofactor.

The protein resides in the cytoplasm. The catalysed reaction is Endonucleolytic cleavage of RNA, removing 5'-extranucleotides from tRNA precursor.. Functionally, part of ribonuclease P, a protein complex that generates mature tRNA molecules by cleaving their 5'-ends. This is Ribonuclease P protein component 4 from Methanosarcina acetivorans (strain ATCC 35395 / DSM 2834 / JCM 12185 / C2A).